Consider the following 270-residue polypeptide: Protein FAM110D (270 aa).

The segment covering 1 to 16 (MLLASPSTPSRGRTPS) has biased composition (low complexity). Disordered regions lie at residues 1–83 (MLLA…RPDS), 117–142 (RDVA…PQDA), and 186–244 (PQSW…QVSV). Residues 68–78 (RPARRGSGRRL) are compositionally biased toward basic residues.

It belongs to the FAM110 family.

The protein is Protein FAM110D (FAM110D) of Bos taurus (Bovine).